We begin with the raw amino-acid sequence, 209 residues long: MFSASIERAQNEAPFPIRQGVFVAVAGPSGGGKDSVMAYARERLGNLAGEIVFARRIITRPFAPGGEEHDTRDVPTFEREEAAGAFALSWRANGLCYALPAALDEEMRSGGVVVANVSRAIIPALGERYAHIFPVIVTAPRGVLAERLSRRGRETRDEVLSRLARSEAGELDVPGALVIDNSGPLEQAGERFLEALRKAAAWSDVCDMV.

27 to 34 (GPSGGGKD) is an ATP binding site.

This sequence belongs to the ribose 1,5-bisphosphokinase family.

It catalyses the reaction alpha-D-ribose 1,5-bisphosphate + ATP = 5-phospho-alpha-D-ribose 1-diphosphate + ADP. It participates in metabolic intermediate biosynthesis; 5-phospho-alpha-D-ribose 1-diphosphate biosynthesis; 5-phospho-alpha-D-ribose 1-diphosphate from D-ribose 5-phosphate (route II): step 3/3. Catalyzes the phosphorylation of ribose 1,5-bisphosphate to 5-phospho-D-ribosyl alpha-1-diphosphate (PRPP). This chain is Ribose 1,5-bisphosphate phosphokinase PhnN, found in Chelativorans sp. (strain BNC1).